Reading from the N-terminus, the 109-residue chain is Biphenyl dioxygenase system ferredoxin subunit (109 aa).

Residues Thr4–Val100 form the Rieske domain. [2Fe-2S] cluster is bound by residues Cys43, His45, Cys63, and His66.

This sequence belongs to the bacterial ring-hydroxylating dioxygenase ferredoxin component family. As to quaternary structure, this dioxygenase system consists of four proteins: the two subunits of the hydroxylase component (BphA and BphE), a ferredoxin (BphF) and a ferredoxin reductase (BphG).

Functionally, this protein seems to be a 2Fe-2S ferredoxin. This chain is Biphenyl dioxygenase system ferredoxin subunit (bphF), found in Paraburkholderia xenovorans (strain LB400).